The chain runs to 146 residues: Leptin (146 aa).

Residues cysteine 96 and cysteine 146 are joined by a disulfide bond.

Belongs to the leptin family.

It is found in the secreted. In terms of biological role, key player in the regulation of energy balance and body weight control. Once released into the circulation, has central and peripheral effects by binding LEPR, found in many tissues, which results in the activation of several major signaling pathways. In the hypothalamus, acts as an appetite-regulating factor that induces a decrease in food intake and an increase in energy consumption by inducing anorexinogenic factors and suppressing orexigenic neuropeptides, also regulates bone mass and secretion of hypothalamo-pituitary-adrenal hormones. In the periphery, increases basal metabolism, influences reproductive function, regulates pancreatic beta-cell function and insulin secretion, is pro-angiogenic for endothelial cell and affects innate and adaptive immunity. In the arcuate nucleus of the hypothalamus, activates by depolarization POMC neurons inducing FOS and SOCS3 expression to release anorexigenic peptides and inhibits by hyperpolarization NPY neurons inducing SOCS3 with a consequent reduction on release of orexigenic peptides. In addition to its known satiety inducing effect, has a modulatory role in nutrient absorption. In the intestine, reduces glucose absorption by enterocytes by activating PKC and leading to a sequential activation of p38, PI3K and ERK signaling pathways which exerts an inhibitory effect on glucose absorption. Acts as a growth factor on certain tissues, through the activation of different signaling pathways increases expression of genes involved in cell cycle regulation such as CCND1, via JAK2-STAT3 pathway, or VEGFA, via MAPK1/3 and PI3K-AKT1 pathways. May also play an apoptotic role via JAK2-STAT3 pathway and up-regulation of BIRC5 expression. Pro-angiogenic, has mitogenic activity on vascular endothelial cells and plays a role in matrix remodeling by regulating the expression of matrix metalloproteinases (MMPs) and tissue inhibitors of metalloproteinases (TIMPs). In innate immunity, modulates the activity and function of neutrophils by increasing chemotaxis and the secretion of oxygen radicals. Increases phagocytosis by macrophages and enhances secretion of pro-inflammatory mediators. Increases cytotoxic ability of NK cells. Plays a pro-inflammatory role, in synergy with IL1B, by inducing NOS2 which promotes the production of IL6, IL8 and Prostaglandin E2, through a signaling pathway that involves JAK2, PI3K, MAP2K1/MEK1 and MAPK14/p38. In adaptive immunity, promotes the switch of memory T-cells towards T helper-1 cell immune responses. Increases CD4(+)CD25(-) T-cell proliferation and reduces autophagy during TCR (T-cell receptor) stimulation, through MTOR signaling pathway activation and BCL2 up-regulation. This chain is Leptin (LEP), found in Pongo pygmaeus (Bornean orangutan).